Here is a 366-residue protein sequence, read N- to C-terminus: Beta-1,3-glucan-binding protein (366 aa).

The first 17 residues, 1 to 17 (MKGFVASVVLLACGALA), serve as a signal peptide directing secretion. The GH16 domain maps to 18–364 (ADIVEPEDCT…YVRVWKMEST (347 aa)). N-linked (GlcNAc...) asparagine glycosylation occurs at Asn66.

Belongs to the glycosyl hydrolase 16 family. As to expression, constitutively expressed in hemocytes.

The protein localises to the secreted. Functionally, binds to beta-1,3-glucan. May play a role in recognition of microorganisms and in activation of the prophenoloxidase cascade. In Penaeus monodon (Giant tiger prawn), this protein is Beta-1,3-glucan-binding protein.